A 196-amino-acid polypeptide reads, in one-letter code: 3-isopropylmalate dehydratase small subunit (196 aa).

Belongs to the LeuD family. LeuD type 1 subfamily. Heterodimer of LeuC and LeuD.

The catalysed reaction is (2R,3S)-3-isopropylmalate = (2S)-2-isopropylmalate. Its pathway is amino-acid biosynthesis; L-leucine biosynthesis; L-leucine from 3-methyl-2-oxobutanoate: step 2/4. Functionally, catalyzes the isomerization between 2-isopropylmalate and 3-isopropylmalate, via the formation of 2-isopropylmaleate. This Corynebacterium efficiens (strain DSM 44549 / YS-314 / AJ 12310 / JCM 11189 / NBRC 100395) protein is 3-isopropylmalate dehydratase small subunit.